We begin with the raw amino-acid sequence, 437 residues long: Protein farnesyltransferase subunit beta (437 aa).

5 PFTB repeats span residues 123-164, 174-215, 222-263, 270-312, and 332-374; these read ATDV…CIIG, REKL…SLTN, FEGT…VILK, LKSL…PLLH, and QQAL…SIAQ. Residues 248–251 and 291–294 contribute to the (2E,6E)-farnesyl diphosphate site; these read HGGY and RCNK. Zn(2+)-binding residues include D297 and C299. 300–303 is a (2E,6E)-farnesyl diphosphate binding site; that stretch reads YSFW. H362 contacts Zn(2+). T436 is modified (phosphothreonine).

This sequence belongs to the protein prenyltransferase subunit beta family. As to quaternary structure, heterodimer of FNTA and FNTB. The cofactor is Zn(2+).

It carries out the reaction L-cysteinyl-[protein] + (2E,6E)-farnesyl diphosphate = S-(2E,6E)-farnesyl-L-cysteinyl-[protein] + diphosphate. Functionally, essential subunit of the farnesyltransferase complex. Catalyzes the transfer of a farnesyl moiety from farnesyl diphosphate to a cysteine at the fourth position from the C-terminus of several proteins having the C-terminal sequence Cys-aliphatic-aliphatic-X. The sequence is that of Protein farnesyltransferase subunit beta (FNTB) from Homo sapiens (Human).